The sequence spans 307 residues: ATP-dependent (S)-NAD(P)H-hydrate dehydratase (307 aa).

Positions 1–291 constitute a YjeF C-terminal domain; sequence MDHFIKLLPK…DEIPKLVRDV (291 aa). (6S)-NADPHX is bound by residues Gly96 and 150–156; that span reads NIVEFSR. ATP-binding positions include 194-198 and 214-223; these read KGEVD and SSLRRCGGQG. Asp224 is a (6S)-NADPHX binding site.

It belongs to the NnrD/CARKD family. Mg(2+) serves as cofactor.

It catalyses the reaction (6S)-NADHX + ATP = ADP + phosphate + NADH + H(+). The catalysed reaction is (6S)-NADPHX + ATP = ADP + phosphate + NADPH + H(+). Its function is as follows. Catalyzes the dehydration of the S-form of NAD(P)HX at the expense of ATP, which is converted to ADP. Together with NAD(P)HX epimerase, which catalyzes the epimerization of the S- and R-forms, the enzyme allows the repair of both epimers of NAD(P)HX, a damaged form of NAD(P)H that is a result of enzymatic or heat-dependent hydration. The chain is ATP-dependent (S)-NAD(P)H-hydrate dehydratase from Caenorhabditis elegans.